A 258-amino-acid polypeptide reads, in one-letter code: Gamma carbonic anhydrase 3, mitochondrial (258 aa).

The N-terminal 43 residues, 1–43, are a transit peptide targeting the mitochondrion; sequence MGTMGKAFYSVGFWIRETGQALDRLGCRLQGKNHFREQLSRHR. Substrate-binding positions include 86–88 and 101–102; these read RGD and QD. Residues H107, H130, and H135 each coordinate Zn(2+). Residue N209 coordinates substrate.

Belongs to the gamma-class carbonic anhydrase family. Homotrimer. Component of the oxidoreductase respiratory chain complex I; element of the extra matrix-exposed domain, which is attached to the membrane arm of this complex. Requires Zn(2+) as cofactor.

The protein localises to the mitochondrion membrane. Its function is as follows. Enzyme involved in the catabolism of H(2)CO(3) but that does not mediates the reversible hydration of carbon dioxide. Mediates complex I assembly in mitochondria and respiration. In Arabidopsis thaliana (Mouse-ear cress), this protein is Gamma carbonic anhydrase 3, mitochondrial (GAMMACA3).